The sequence spans 263 residues: Purine nucleoside phosphorylase SERP0752 (263 aa).

Zn(2+) contacts are provided by H79, C124, and H141.

It belongs to the purine nucleoside phosphorylase YfiH/LACC1 family. As to quaternary structure, homodimer. The cofactor is Cu(2+). Zn(2+) serves as cofactor.

The catalysed reaction is adenosine + phosphate = alpha-D-ribose 1-phosphate + adenine. It carries out the reaction S-methyl-5'-thioadenosine + phosphate = 5-(methylsulfanyl)-alpha-D-ribose 1-phosphate + adenine. It catalyses the reaction inosine + phosphate = alpha-D-ribose 1-phosphate + hypoxanthine. The enzyme catalyses adenosine + H2O + H(+) = inosine + NH4(+). Functionally, purine nucleoside enzyme that catalyzes the phosphorolysis of adenosine and inosine nucleosides, yielding D-ribose 1-phosphate and the respective free bases, adenine and hypoxanthine. Also catalyzes the phosphorolysis of S-methyl-5'-thioadenosine into adenine and S-methyl-5-thio-alpha-D-ribose 1-phosphate. Also has adenosine deaminase activity. The polypeptide is Purine nucleoside phosphorylase SERP0752 (Staphylococcus epidermidis (strain ATCC 35984 / DSM 28319 / BCRC 17069 / CCUG 31568 / BM 3577 / RP62A)).